We begin with the raw amino-acid sequence, 372 residues long: Protein L-Myc-1a (372 aa).

Disordered stretches follow at residues 172-226 and 243-306; these read KVAA…ADPF and NYAA…DDLR. Positions 187-197 are enriched in acidic residues; sequence SDDDEDDDEID. The segment covering 269–284 has biased composition (low complexity); sequence ESSSAPSSPLSSPATS. In terms of domain architecture, bHLH spans 289–341; the sequence is STEQRRNFLERKRRDDLRSRFQALREEIPGLSGSSKTSKVAILTQATDYLLQL. A compositionally biased stretch (basic and acidic residues) spans 290–306; it reads TEQRRNFLERKRRDDLR. Residues 341–369 are leucine-zipper; sequence LHSSQRRQAQEKRKLKAKQQQLLRRISAL.

In terms of assembly, efficient DNA binding requires dimerization with another bHLH protein. Binds DNA as a heterodimer with max. As to expression, uterus.

The protein localises to the nucleus. The polypeptide is Protein L-Myc-1a (Danio rerio (Zebrafish)).